We begin with the raw amino-acid sequence, 243 residues long: Carboxy-S-adenosyl-L-methionine synthase (243 aa).

S-adenosyl-L-methionine contacts are provided by residues Y40, 65–67 (GCS), 90–91 (DN), 118–119 (DI), N133, and R200.

It belongs to the class I-like SAM-binding methyltransferase superfamily. Cx-SAM synthase family. Homodimer.

The enzyme catalyses prephenate + S-adenosyl-L-methionine = carboxy-S-adenosyl-L-methionine + 3-phenylpyruvate + H2O. In terms of biological role, catalyzes the conversion of S-adenosyl-L-methionine (SAM) to carboxy-S-adenosyl-L-methionine (Cx-SAM). The polypeptide is Carboxy-S-adenosyl-L-methionine synthase (Shewanella baltica (strain OS155 / ATCC BAA-1091)).